The sequence spans 491 residues: UDP-N-acetylmuramoyl-L-alanyl-D-glutamate--2,6-diaminopimelate ligase (491 aa).

Position 30 (S30) interacts with UDP-N-acetyl-alpha-D-muramoyl-L-alanyl-D-glutamate. G108–T114 contacts ATP. UDP-N-acetyl-alpha-D-muramoyl-L-alanyl-D-glutamate contacts are provided by residues N149, T150–T151, S177, and R185. K217 is modified (N6-carboxylysine). Meso-2,6-diaminopimelate-binding positions include R383, D407 to R410, G457, and E461. The Meso-diaminopimelate recognition motif signature appears at D407–R410.

The protein belongs to the MurCDEF family. MurE subfamily. It depends on Mg(2+) as a cofactor. Post-translationally, carboxylation is probably crucial for Mg(2+) binding and, consequently, for the gamma-phosphate positioning of ATP.

The protein resides in the cytoplasm. The catalysed reaction is UDP-N-acetyl-alpha-D-muramoyl-L-alanyl-D-glutamate + meso-2,6-diaminopimelate + ATP = UDP-N-acetyl-alpha-D-muramoyl-L-alanyl-gamma-D-glutamyl-meso-2,6-diaminopimelate + ADP + phosphate + H(+). Its pathway is cell wall biogenesis; peptidoglycan biosynthesis. Functionally, catalyzes the addition of meso-diaminopimelic acid to the nucleotide precursor UDP-N-acetylmuramoyl-L-alanyl-D-glutamate (UMAG) in the biosynthesis of bacterial cell-wall peptidoglycan. This is UDP-N-acetylmuramoyl-L-alanyl-D-glutamate--2,6-diaminopimelate ligase from Bacillus cereus (strain ATCC 14579 / DSM 31 / CCUG 7414 / JCM 2152 / NBRC 15305 / NCIMB 9373 / NCTC 2599 / NRRL B-3711).